Here is a 154-residue protein sequence, read N- to C-terminus: 3-hydroxyacyl-[acyl-carrier-protein] dehydratase FabZ (154 aa).

Residue H57 is part of the active site.

It belongs to the thioester dehydratase family. FabZ subfamily.

It is found in the cytoplasm. The enzyme catalyses a (3R)-hydroxyacyl-[ACP] = a (2E)-enoyl-[ACP] + H2O. Its function is as follows. Involved in unsaturated fatty acids biosynthesis. Catalyzes the dehydration of short chain beta-hydroxyacyl-ACPs and long chain saturated and unsaturated beta-hydroxyacyl-ACPs. The polypeptide is 3-hydroxyacyl-[acyl-carrier-protein] dehydratase FabZ (Allorhizobium ampelinum (strain ATCC BAA-846 / DSM 112012 / S4) (Agrobacterium vitis (strain S4))).